Consider the following 239-residue polypeptide: Fatty acid metabolism regulator protein (239 aa).

An HTH gntR-type domain is found at 6–74 (QSPAGFAEEY…HGKPTKVNNF (69 aa)). Positions 34–53 (ERELSELIGVTRTTLREVLQ) form a DNA-binding region, H-T-H motif.

Homodimer.

It localises to the cytoplasm. Functionally, multifunctional regulator of fatty acid metabolism. The sequence is that of Fatty acid metabolism regulator protein from Enterobacter sp. (strain 638).